Here is a 100-residue protein sequence, read N- to C-terminus: Defensin-6 (100 aa).

An N-terminal signal peptide occupies residues 1 to 19 (MRTLTILTAVLLVALQAKA). The propeptide occupies 20-68 (EPLQAEDEPLQAKAYEADAQEQRGANDQDFAVSFAEDASSSLRALGSTR). 3 cysteine pairs are disulfide-bonded: cysteine 72-cysteine 99, cysteine 74-cysteine 88, and cysteine 78-cysteine 98.

The protein belongs to the alpha-defensin family. As to quaternary structure, homodimer. Self-assembles into higher-order oligomers termed nanonets, fibril-like structures that entrap microbes. Self-assembly into nanonets seems to protect against proteolytic digestion in duodenal fluid. Interacts with Y.enterocolitica invasin and S.typhimurium fliC/flagellim; the interaction creates an anchoring site for progressive DEFA6 self-assembly into nanonets. Post-translationally, proteolytically cleaved by trypsin at Arg-68; the propeptide is stored in the tissue of the small intestine and the mature peptide is found in the luminal fluid; cleavage may occur during or after release into the lumen. The N-terminal propeptide region suppresses self-assembly and renders DEFA6 propeptide unable to agglutinate bacteria and protect human epithelial cells from bacterial invasion. Under reducing conditions, naturally present in the gut owing to the low redox potential or enzymatically generated by the thioredoxin system, the disulfide bridges are opened leading to a conformational change of DEF6, thereby changing its antimicrobial spectrum. The reduced form exhibits inhibitory activity against anaerobic bacteria, in contrast to the minimal antimicrobial activity of the disulfide-linked oxidized form. The formation of higher-order nanonets and bacterial entrapment is independent of the redox state.

It is found in the secreted. Its subcellular location is the cytoplasmic vesicle. The protein localises to the secretory vesicle. Functionally, host-defense peptide that contributes to intestinal innate immunity and mediates homeostasis at mucosal surfaces by forming higher-order oligomers that capture bacteria and prevent microbial invasion of the epithelium. After binding to bacterial surface proteins, undergoes ordered self-assembly to form fibril-like nanonets that surround and entangle bacteria and thereby prevent bacterial invasion across the epithelial barrier. Entangles and agglutinates Gram-negative bacteria, such as E.coli, S.typhimurium and Y.enterocolitica, and Gram-positive bacteria such as L.monocytogenes, thereby protecting the intestine against invasion by enteric bacterial pathogens. Blocks adhesion of C.albicans to intestinal epithelial cells and thereby suppresses fungal invasion of epithelial cells and biofilm formation. Under reducing conditions and in an acidic environment similar to the intestinal milieu, exhibits inhibitory activity against anaerobic bacteria such as B.adolescentis, L.acidophilus, and B.breve, as well as B.longum and S.thermophilus, possibly by leading to alterations in bacterial cell envelope structures. The disulfide-linked oxidized form exhibits negligible antimicrobial activity against Gram-negative and Gram-positive bacteria, as compared to the enteric defensin DEFA5. This chain is Defensin-6 (DEFA6), found in Pan troglodytes (Chimpanzee).